Consider the following 132-residue polypeptide: Acid shock protein (132 aa).

Positions 1 to 21 are cleaved as a signal peptide; the sequence is MKKVLALIVAATMGLSSVAFA. Residues 22 to 69 constitute a propeptide that is removed on maturation; sequence AETTAAATAAPAATSTTAAPAVEKAAPAKATHHKKHKATKQTTEQKAQ. Positions 30–50 are enriched in low complexity; sequence AAPAATSTTAAPAVEKAAPAK. Residues 30–132 form a disordered region; it reads AAPAATSTTA…AKKSATAPAA (103 aa). The span at 51–60 shows a compositional bias: basic residues; that stretch reads ATHHKKHKAT. A compositionally biased stretch (low complexity) spans 61–99; that stretch reads KQTTEQKAQAAKKAVKKAPAQKAQAAKKAVKKAPVQKAQ. A compositionally biased stretch (basic residues) spans 100–124; sequence AAKKHVKKAPAQKAQAAKKHHKTAK.

The protein belongs to the Asr family. Post-translationally, proteolytic processing gives rise to the active protein.

It localises to the periplasm. Its function is as follows. Required for growth and/or survival at acidic conditions. The chain is Acid shock protein from Yersinia enterocolitica serotype O:8 / biotype 1B (strain NCTC 13174 / 8081).